Reading from the N-terminus, the 700-residue chain is Dymeclin (700 aa).

Residue G2 is the site of N-myristoyl glycine attachment. Residue S347 is modified to Phosphoserine.

This sequence belongs to the dymeclin family.

In Drosophila pseudoobscura pseudoobscura (Fruit fly), this protein is Dymeclin.